Reading from the N-terminus, the 241-residue chain is MALLPLPLPFAELEVGHHLYWQIGDLYLHGQVFLSSWILIGILLAVVLVGTRGMKRDPIGLQNLLEFLWNFIRDIARDNIGEKYYRDWLPFIGTLFLFIFVSNWGGALIPWKIFELPEGELGAPTADINTTVAMALLVSLAYFYAGLSRKGLRFFELYVEPTPIMLPFKIIEEFTKPLSLSFRLFGNILADELAVGVLVYLVPLIVPLPVMLLGLFTSAIQALIFATLASFYIGEGLHEAH.

5 helical membrane passes run Gly30–Gly50, Leu89–Ile109, Ile128–Ser148, Leu193–Leu213, and Gly214–Gly234.

The protein belongs to the ATPase A chain family. As to quaternary structure, F-type ATPases have 2 components, CF(1) - the catalytic core - and CF(0) - the membrane proton channel. CF(1) has five subunits: alpha(3), beta(3), gamma(1), delta(1), epsilon(1). CF(0) has four main subunits: a, b, b' and c.

The protein localises to the cellular thylakoid membrane. Key component of the proton channel; it plays a direct role in the translocation of protons across the membrane. This Synechococcus sp. (strain CC9605) protein is ATP synthase subunit a.